A 154-amino-acid chain; its full sequence is 6,7-dimethyl-8-ribityllumazine synthase (154 aa).

Residues Phe-22, 56 to 58, and 80 to 82 each bind 5-amino-6-(D-ribitylamino)uracil; these read AFE and AVI. 85–86 contacts (2S)-2-hydroxy-3-oxobutyl phosphate; sequence AT. Residue His-88 is the Proton donor of the active site. Phe-113 contributes to the 5-amino-6-(D-ribitylamino)uracil binding site. A (2S)-2-hydroxy-3-oxobutyl phosphate-binding site is contributed by Arg-127.

Belongs to the DMRL synthase family.

It carries out the reaction (2S)-2-hydroxy-3-oxobutyl phosphate + 5-amino-6-(D-ribitylamino)uracil = 6,7-dimethyl-8-(1-D-ribityl)lumazine + phosphate + 2 H2O + H(+). It functions in the pathway cofactor biosynthesis; riboflavin biosynthesis; riboflavin from 2-hydroxy-3-oxobutyl phosphate and 5-amino-6-(D-ribitylamino)uracil: step 1/2. Catalyzes the formation of 6,7-dimethyl-8-ribityllumazine by condensation of 5-amino-6-(D-ribitylamino)uracil with 3,4-dihydroxy-2-butanone 4-phosphate. This is the penultimate step in the biosynthesis of riboflavin. This is 6,7-dimethyl-8-ribityllumazine synthase from Desulfitobacterium hafniense (strain DSM 10664 / DCB-2).